We begin with the raw amino-acid sequence, 467 residues long: Transcription factor fos-1 (467 aa).

A compositionally biased stretch (low complexity) spans 1 to 22 (MFEQPSSTTNTTTSSGSGSDSN). Disordered regions lie at residues 1-38 (MFEQPSSTTNTTTSSGSGSDSNHYFELGPRNPINQAHP) and 139-179 (QYST…AAAR). Residues 163–226 (DDKRLKRRQR…NSLKNYLETH (64 aa)) enclose the bZIP domain. A basic motif region spans residues 165 to 205 (KRLKRRQRNKEAAARCRQRRIDLMKELQDQVNDFKNSNDKK). Positions 212–219 (IRNKLNSL) are leucine-zipper. Disordered regions lie at residues 266–291 (RADSVPYSIRSGHSSSSSEQHSPVED) and 395–467 (QPIT…LRPL). The span at 273–286 (SIRSGHSSSSSEQH) shows a compositional bias: low complexity. Residues 434-454 (SSNTGLTPSGQPTMNFVSTPT) show a composition bias toward polar residues. Phosphothreonine occurs at positions 440, 452, and 454.

This sequence belongs to the bZIP family. Fos subfamily. As to quaternary structure, homodimer. Heterodimer; with jun-1. Interacts with kgb-1 and hda-1. Post-translationally, may be phosphorylated by kgb-1. Phosphorylation at Thr-440 increases sensitivity to heavy metal stress. Phosphorylation inhibits homodimer formation, and promotes association with target promoters. In terms of tissue distribution, expressed in anchor cells. Isoform a is expressed in somatic gonad cells that neighbor anchor cells. Isoform b is expressed in vulval cells, the uterine cells that neighbor anchor cells and the spermatheca.

Its subcellular location is the nucleus. Functionally, developmentally regulated transcription factor which binds and recognizes the enhancer DNA sequence 5'-TGA[CG]TCA-3'. Its function is as follows. Plays a role the development of the reproductive system, controlling events including anchor cell (AC) fusion and invasion. Regulates downstream transcriptional targets, including zmp-1, cdh-3, him-4 and mig10b, to promote the removal of the gonadal basement membrane during AC invasion. Regulates aff-1 expression to promote AC fusion. With jun-1 regulates egl-1 and lin-12 expression to allow uterine cell specification and development. In terms of biological role, required for ovulation. Controls plc-1 expression in the spermatheca to regulate spermathecal valve dilation. Acts with hda-1 as a downstream repressor of the kgb-1 mediated stress response pathway that transcriptionally represses genes involved in the response to heavy metals, such as kreg-1. The sequence is that of Transcription factor fos-1 from Caenorhabditis elegans.